We begin with the raw amino-acid sequence, 85 residues long: Large ribosomal subunit protein bL31B (85 aa).

The protein belongs to the bacterial ribosomal protein bL31 family. Type B subfamily. Part of the 50S ribosomal subunit.

This is Large ribosomal subunit protein bL31B from Staphylococcus saprophyticus subsp. saprophyticus (strain ATCC 15305 / DSM 20229 / NCIMB 8711 / NCTC 7292 / S-41).